The sequence spans 635 residues: Threonine--tRNA ligase (635 aa).

An editing domain region spans residues 1–144 (MQLLLIHSDY…RTIRLEGAVP (144 aa)). The segment at 215 to 514 (PHVELMRRLE…AEEGKVPNLP (300 aa)) is catalytic. Positions 307, 359, and 483 each coordinate Zn(2+).

Belongs to the class-II aminoacyl-tRNA synthetase family. In terms of assembly, homodimer. Zn(2+) is required as a cofactor.

It localises to the cytoplasm. The enzyme catalyses tRNA(Thr) + L-threonine + ATP = L-threonyl-tRNA(Thr) + AMP + diphosphate + H(+). Its function is as follows. Catalyzes the attachment of threonine to tRNA(Thr) in a two-step reaction: L-threonine is first activated by ATP to form Thr-AMP and then transferred to the acceptor end of tRNA(Thr). Also edits incorrectly charged L-seryl-tRNA(Thr). The protein is Threonine--tRNA ligase of Methanococcoides burtonii (strain DSM 6242 / NBRC 107633 / OCM 468 / ACE-M).